Here is a 302-residue protein sequence, read N- to C-terminus: Nucleotide-binding protein Bcep18194_A6125 (302 aa).

8–15 lines the ATP pocket; that stretch reads GISGSGKS. GTP is bound at residue 57–60; sequence DARS.

This sequence belongs to the RapZ-like family.

Its function is as follows. Displays ATPase and GTPase activities. The polypeptide is Nucleotide-binding protein Bcep18194_A6125 (Burkholderia lata (strain ATCC 17760 / DSM 23089 / LMG 22485 / NCIMB 9086 / R18194 / 383)).